The chain runs to 383 residues: Anhydro-N-acetylmuramic acid kinase (383 aa).

An ATP-binding site is contributed by 9–16 (GTSVDSID).

It belongs to the anhydro-N-acetylmuramic acid kinase family.

It catalyses the reaction 1,6-anhydro-N-acetyl-beta-muramate + ATP + H2O = N-acetyl-D-muramate 6-phosphate + ADP + H(+). Its pathway is amino-sugar metabolism; 1,6-anhydro-N-acetylmuramate degradation. The protein operates within cell wall biogenesis; peptidoglycan recycling. In terms of biological role, catalyzes the specific phosphorylation of 1,6-anhydro-N-acetylmuramic acid (anhMurNAc) with the simultaneous cleavage of the 1,6-anhydro ring, generating MurNAc-6-P. Is required for the utilization of anhMurNAc either imported from the medium or derived from its own cell wall murein, and thus plays a role in cell wall recycling. In Crocosphaera subtropica (strain ATCC 51142 / BH68) (Cyanothece sp. (strain ATCC 51142)), this protein is Anhydro-N-acetylmuramic acid kinase.